The primary structure comprises 246 residues: Chlorophyll a-b binding protein 6A, chloroplastic (246 aa).

A chloroplast-targeting transit peptide spans 1 to 45 (MASNTLMSCGIPAVCPSFLSSTKSKFAAAMPVYVGATNFMSRFSM). Tryptophan 49 contacts chlorophyll b. Chlorophyll a is bound by residues phenylalanine 69, glutamate 88, and histidine 91. Arginine 93 serves as a coordination point for chlorophyll b. The helical transmembrane segment at 94-114 (WAMLAVPGIIVPEALGLGNWV) threads the bilayer. Leucine 130 serves as a coordination point for chlorophyll a. Residues 133–153 (PVPWGTLPTILAIEFLAIAFV) traverse the membrane as a helical segment. Valine 134, glutamate 154, and arginine 157 together coordinate chlorophyll b. Positions 191, 192, 195, 197, 209, and 225 each coordinate chlorophyll a.

Belongs to the light-harvesting chlorophyll a/b-binding (LHC) protein family. In terms of assembly, the LHC complex consists of chlorophyll a-b binding proteins. The cofactor is Binds at least 14 chlorophylls (8 Chl-a and 6 Chl-b) and carotenoids such as lutein and neoxanthin.. In terms of processing, photoregulated by reversible phosphorylation of its threonine residues.

The protein localises to the plastid. It localises to the chloroplast thylakoid membrane. In terms of biological role, the light-harvesting complex (LHC) functions as a light receptor, it captures and delivers excitation energy to photosystems with which it is closely associated. This Solanum lycopersicum (Tomato) protein is Chlorophyll a-b binding protein 6A, chloroplastic (CAB6A).